Reading from the N-terminus, the 233-residue chain is Large ribosomal subunit protein uL1 (233 aa).

The protein belongs to the universal ribosomal protein uL1 family. Part of the 50S ribosomal subunit.

Its function is as follows. Binds directly to 23S rRNA. The L1 stalk is quite mobile in the ribosome, and is involved in E site tRNA release. Functionally, protein L1 is also a translational repressor protein, it controls the translation of the L11 operon by binding to its mRNA. In Psychrobacter arcticus (strain DSM 17307 / VKM B-2377 / 273-4), this protein is Large ribosomal subunit protein uL1.